A 394-amino-acid chain; its full sequence is Elongation factor Tu (394 aa).

One can recognise a tr-type G domain in the interval 10–204; sequence KPHVNVGTIG…ALDTYIPEPE (195 aa). Positions 19–26 are G1; sequence GHVDHGKT. Residue 19-26 participates in GTP binding; the sequence is GHVDHGKT. Threonine 26 is a Mg(2+) binding site. Residues 60–64 are G2; the sequence is GITIN. The interval 81–84 is G3; sequence DCPG. GTP is bound by residues 81-85 and 136-139; these read DCPGH and NKCD. Positions 136-139 are G4; the sequence is NKCD. Residues 174 to 176 form a G5 region; sequence SAL.

This sequence belongs to the TRAFAC class translation factor GTPase superfamily. Classic translation factor GTPase family. EF-Tu/EF-1A subfamily. As to quaternary structure, monomer.

It localises to the cytoplasm. The catalysed reaction is GTP + H2O = GDP + phosphate + H(+). GTP hydrolase that promotes the GTP-dependent binding of aminoacyl-tRNA to the A-site of ribosomes during protein biosynthesis. The chain is Elongation factor Tu from Shewanella sediminis (strain HAW-EB3).